The following is a 421-amino-acid chain: Functional amyloid transporter FapF (421 aa).

An N-terminal signal peptide occupies residues 1-24 (MTQTLSLRAVLCATTLVSPFLAQA). Residues 23–64 (QAATESEVEALKKELLELRQRYEAQQNALMVLEQRVRQVEAQ) adopt a coiled-coil conformation.

The protein belongs to the amyloid transporter (TC 9.B.153) family.

Its subcellular location is the secreted. The protein localises to the cell surface. It is found in the cell outer membrane. In terms of biological role, transports fibril components across the outer membrane. Upon overexpression of the endogenous six-gene locus (fapA-fapF), cells form large clumps during liquid growth, make large amounts of biofilm and produce amyloid fibrils. This chain is Functional amyloid transporter FapF, found in Pseudomonas aeruginosa (strain ATCC 15692 / DSM 22644 / CIP 104116 / JCM 14847 / LMG 12228 / 1C / PRS 101 / PAO1).